The chain runs to 66 residues: Large ribosomal subunit protein uL29 (66 aa).

This sequence belongs to the universal ribosomal protein uL29 family.

The polypeptide is Large ribosomal subunit protein uL29 (Bartonella tribocorum (strain CIP 105476 / IBS 506)).